The sequence spans 355 residues: GTPase Obg (355 aa).

The Obg domain maps to 1 to 159 (MKLVDEAEIL…RLLKLELKLL (159 aa)). The OBG-type G domain occupies 160 to 342 (ADVGLLGFPN…IMKDVMAFFD (183 aa)). Residues 166-173 (GFPNAGKS), 191-195 (FTTLY), 213-216 (DVPG), 292-295 (NKAD), and 323-325 (SAL) each bind GTP. Residues Ser-173 and Thr-193 each contribute to the Mg(2+) site.

It belongs to the TRAFAC class OBG-HflX-like GTPase superfamily. OBG GTPase family. In terms of assembly, monomer. The cofactor is Mg(2+).

It is found in the cytoplasm. In terms of biological role, an essential GTPase which binds GTP, GDP and possibly (p)ppGpp with moderate affinity, with high nucleotide exchange rates and a fairly low GTP hydrolysis rate. Plays a role in control of the cell cycle, stress response, ribosome biogenesis and in those bacteria that undergo differentiation, in morphogenesis control. The polypeptide is GTPase Obg (Xanthomonas axonopodis pv. citri (strain 306)).